Reading from the N-terminus, the 147-residue chain is Small ribosomal subunit protein bS6 (147 aa).

The interval 96 to 147 (VTEPSPMMKAKEERFTKRDDREERSDRSEAPRAEAPAKAEAPAKAEDEAAAE) is disordered. Residues 104–147 (KAKEERFTKRDDREERSDRSEAPRAEAPAKAEAPAKAEDEAAAE) show a composition bias toward basic and acidic residues.

It belongs to the bacterial ribosomal protein bS6 family.

Binds together with bS18 to 16S ribosomal RNA. In Photobacterium profundum (strain SS9), this protein is Small ribosomal subunit protein bS6.